The chain runs to 211 residues: Methylthioribulose-1-phosphate dehydratase (211 aa).

Zn(2+) contacts are provided by H101 and H103.

Belongs to the aldolase class II family. MtnB subfamily. It depends on Zn(2+) as a cofactor.

It catalyses the reaction 5-(methylsulfanyl)-D-ribulose 1-phosphate = 5-methylsulfanyl-2,3-dioxopentyl phosphate + H2O. Its pathway is amino-acid biosynthesis; L-methionine biosynthesis via salvage pathway; L-methionine from S-methyl-5-thio-alpha-D-ribose 1-phosphate: step 2/6. Catalyzes the dehydration of methylthioribulose-1-phosphate (MTRu-1-P) into 2,3-diketo-5-methylthiopentyl-1-phosphate (DK-MTP-1-P). This chain is Methylthioribulose-1-phosphate dehydratase, found in Alcanivorax borkumensis (strain ATCC 700651 / DSM 11573 / NCIMB 13689 / SK2).